Here is a 160-residue protein sequence, read N- to C-terminus: DNA polymerase delta subunit 4 (160 aa).

The tract at residues 1–48 (MKKRTTQAKKSGQNTNIRDVFPHVVRSNSSQSHIGKKVSSEQSPTPDV) is disordered. Positions 8 to 17 (AKKSGQNTNI) are enriched in polar residues.

This sequence belongs to the DNA polymerase delta subunit 4 family. As to quaternary structure, heterotetramer that consist of the pol3, cdc1, cdc27 and cdm1 subunits. Interacts with cdc1 and pol3.

The protein resides in the nucleus. In terms of biological role, appears to have a role in the stabilization of the DNA polymerase delta complex. The sequence is that of DNA polymerase delta subunit 4 (cdm1) from Schizosaccharomyces pombe (strain 972 / ATCC 24843) (Fission yeast).